The primary structure comprises 89 residues: Small ribosomal subunit protein uS15 (89 aa).

The protein belongs to the universal ribosomal protein uS15 family. Part of the 30S ribosomal subunit. Forms a bridge to the 50S subunit in the 70S ribosome, contacting the 23S rRNA.

Its function is as follows. One of the primary rRNA binding proteins, it binds directly to 16S rRNA where it helps nucleate assembly of the platform of the 30S subunit by binding and bridging several RNA helices of the 16S rRNA. Forms an intersubunit bridge (bridge B4) with the 23S rRNA of the 50S subunit in the ribosome. The polypeptide is Small ribosomal subunit protein uS15 (Anoxybacillus flavithermus (strain DSM 21510 / WK1)).